The following is a 786-amino-acid chain: Signal transducer and activator of transcription 5B (786 aa).

The residue at position 90 (tyrosine 90) is a Phosphotyrosine. Serine 128 is subject to Phosphoserine. An SH2 domain is found at 589–686 (WNDGAILGFV…EVYSKYYTPV (98 aa)). Phosphotyrosine is present on residues tyrosine 682 and tyrosine 699.

Belongs to the transcription factor STAT family. As to quaternary structure, upon activation, forms a homodimer or a heterodimer with a related family member. Binds NR3C1. Interacts with NCOA1. Interacts with NMI. Interacts with SOCS7. Interacts (via SH2 domain) with INSR. Interacts with CPEB3; this inhibits STAT5B-mediated transcriptional activation. Tyrosine phosphorylated in response to signaling via activated KIT, resulting in translocation to the nucleus. Tyrosine phosphorylated in response to signaling via activated FLT3; wild-type FLT3 results in much weaker phosphorylation than constitutively activated mutant FLT3. Alternatively, can be phosphorylated by JAK2. Phosphorylation at Tyr-699 by PTK6 or HCK leads to an increase of its transcriptional activity.

It localises to the cytoplasm. The protein resides in the nucleus. Its function is as follows. Carries out a dual function: signal transduction and activation of transcription. Mediates cellular responses to the cytokine KITLG/SCF and other growth factors. Binds to the GAS element and activates PRL-induced transcription. Positively regulates hematopoietic/erythroid differentiation. The protein is Signal transducer and activator of transcription 5B (Stat5b) of Rattus norvegicus (Rat).